Consider the following 452-residue polypeptide: Probable mannose-6-phosphate isomerase (452 aa).

Residues Q141, H143, E168, and H295 each coordinate Zn(2+). Residue R314 is part of the active site.

This sequence belongs to the mannose-6-phosphate isomerase type 1 family. Requires Zn(2+) as cofactor.

Its subcellular location is the cytoplasm. It carries out the reaction D-mannose 6-phosphate = D-fructose 6-phosphate. It participates in nucleotide-sugar biosynthesis; GDP-alpha-D-mannose biosynthesis; alpha-D-mannose 1-phosphate from D-fructose 6-phosphate: step 1/2. In terms of biological role, involved in the synthesis of the GDP-mannose and dolichol-phosphate-mannose required for a number of critical mannosyl transfer reactions. This chain is Probable mannose-6-phosphate isomerase (mpi), found in Dictyostelium discoideum (Social amoeba).